Reading from the N-terminus, the 622-residue chain is Apical membrane antigen 1 (622 aa).

The first 24 residues, 1-24 (MRKLYCVLLLSAFEFTYMINFGRG), serve as a signal peptide directing secretion. Residues 25–546 (QNYWEHPYQK…EHKPTYDKMK (522 aa)) lie on the Extracellular side of the membrane. 5 disulfides stabilise this stretch: cysteine 149–cysteine 302, cysteine 217–cysteine 247, cysteine 263–cysteine 275, cysteine 320–cysteine 418, and cysteine 337–cysteine 409. A glycan (N-linked (GlcNAc...) asparagine) is linked at asparagine 162. N-linked (GlcNAc...) asparagine glycans are attached at residues asparagine 286, asparagine 371, asparagine 421, asparagine 422, and asparagine 499. 3 cysteine pairs are disulfide-bonded: cysteine 443-cysteine 502, cysteine 490-cysteine 507, and cysteine 492-cysteine 509. Residues 547-567 (IIIASSAAVAVLATILMVYLY) traverse the membrane as a helical segment. The Cytoplasmic segment spans residues 568–622 (KRKGNAEKYDKMDEPQDYGKSNSRNDEMLDPEASFWGEEKRASHTTPVLMEKPYY). Residues 577 to 607 (DKMDEPQDYGKSNSRNDEMLDPEASFWGEEK) are disordered.

The protein belongs to the apicomplexan parasites AMA1 family.

It is found in the membrane. Its function is as follows. Involved in parasite invasion of erythrocytes. The polypeptide is Apical membrane antigen 1 (AMA-1) (Plasmodium falciparum (isolate 7G8)).